Here is an 89-residue protein sequence, read N- to C-terminus: Small ribosomal subunit protein uS15 (89 aa).

The disordered stretch occupies residues 1-22 (MALEKEEKSQIINNYQLHETDT). Residues 10-22 (QIINNYQLHETDT) show a composition bias toward polar residues.

Belongs to the universal ribosomal protein uS15 family. As to quaternary structure, part of the 30S ribosomal subunit. Forms a bridge to the 50S subunit in the 70S ribosome, contacting the 23S rRNA.

Its function is as follows. One of the primary rRNA binding proteins, it binds directly to 16S rRNA where it helps nucleate assembly of the platform of the 30S subunit by binding and bridging several RNA helices of the 16S rRNA. Forms an intersubunit bridge (bridge B4) with the 23S rRNA of the 50S subunit in the ribosome. This is Small ribosomal subunit protein uS15 from Chloroflexus aggregans (strain MD-66 / DSM 9485).